We begin with the raw amino-acid sequence, 83 residues long: Cytochrome c oxidase subunit 7A2, mitochondrial (83 aa).

A mitochondrion-targeting transit peptide spans 1 to 23 (MLRNVLALRQIAQRTISTTSRRH). The Mitochondrial matrix segment spans residues 24–48 (FENKVPEKQKLFQEDNGMPVHLKGG). Lysine 33 carries the post-translational modification N6-acetyllysine. The chain crosses the membrane as a helical span at residues 49–77 (TSDALLYRATMLLTVGGTAYAIYMLAMAA). Residues 78–83 (FPKKQN) lie on the Mitochondrial intermembrane side of the membrane.

The protein belongs to the cytochrome c oxidase VIIa family. Component of the cytochrome c oxidase (complex IV, CIV), a multisubunit enzyme composed of 14 subunits. The complex is composed of a catalytic core of 3 subunits MT-CO1, MT-CO2 and MT-CO3, encoded in the mitochondrial DNA, and 11 supernumerary subunits COX4I, COX5A, COX5B, COX6A, COX6B, COX6C, COX7A, COX7B, COX7C, COX8 and NDUFA4, which are encoded in the nuclear genome. The complex exists as a monomer or a dimer and forms supercomplexes (SCs) in the inner mitochondrial membrane with NADH-ubiquinone oxidoreductase (complex I, CI) and ubiquinol-cytochrome c oxidoreductase (cytochrome b-c1 complex, complex III, CIII), resulting in different assemblies (supercomplex SCI(1)III(2)IV(1) and megacomplex MCI(2)III(2)IV(2)). Interacts with PET100.

The protein localises to the mitochondrion inner membrane. Its pathway is energy metabolism; oxidative phosphorylation. Functionally, component of the cytochrome c oxidase, the last enzyme in the mitochondrial electron transport chain which drives oxidative phosphorylation. The respiratory chain contains 3 multisubunit complexes succinate dehydrogenase (complex II, CII), ubiquinol-cytochrome c oxidoreductase (cytochrome b-c1 complex, complex III, CIII) and cytochrome c oxidase (complex IV, CIV), that cooperate to transfer electrons derived from NADH and succinate to molecular oxygen, creating an electrochemical gradient over the inner membrane that drives transmembrane transport and the ATP synthase. Cytochrome c oxidase is the component of the respiratory chain that catalyzes the reduction of oxygen to water. Electrons originating from reduced cytochrome c in the intermembrane space (IMS) are transferred via the dinuclear copper A center (CU(A)) of subunit 2 and heme A of subunit 1 to the active site in subunit 1, a binuclear center (BNC) formed by heme A3 and copper B (CU(B)). The BNC reduces molecular oxygen to 2 water molecules using 4 electrons from cytochrome c in the IMS and 4 protons from the mitochondrial matrix. This chain is Cytochrome c oxidase subunit 7A2, mitochondrial (Cox7a2), found in Rattus norvegicus (Rat).